A 221-amino-acid polypeptide reads, in one-letter code: Large ribosomal subunit protein uL3 (221 aa).

Residues 140-160 form a disordered region; sequence GGPKTHGSGFHRHAGSIGMRS.

This sequence belongs to the universal ribosomal protein uL3 family. In terms of assembly, part of the 50S ribosomal subunit. Forms a cluster with proteins L14 and L19.

In terms of biological role, one of the primary rRNA binding proteins, it binds directly near the 3'-end of the 23S rRNA, where it nucleates assembly of the 50S subunit. This Chlamydia caviae (strain ATCC VR-813 / DSM 19441 / 03DC25 / GPIC) (Chlamydophila caviae) protein is Large ribosomal subunit protein uL3.